We begin with the raw amino-acid sequence, 133 residues long: Secreted effector protein SteB (133 aa).

It localises to the secreted. The protein resides in the host cytoplasm. In terms of biological role, effector proteins function to alter host cell physiology and promote bacterial survival in host tissues. In Salmonella typhimurium (strain 14028s / SGSC 2262), this protein is Secreted effector protein SteB (steB).